Reading from the N-terminus, the 66-residue chain is Large ribosomal subunit protein bL35 (66 aa).

Basic residues predominate over residues 1 to 26 (MPKMKTHRGSAKRFKKTGSGKLKRSH). The tract at residues 1–45 (MPKMKTHRGSAKRFKKTGSGKLKRSHAYTSHLFANKSQKQKRKLR) is disordered.

Belongs to the bacterial ribosomal protein bL35 family.

In Bacillus velezensis (strain DSM 23117 / BGSC 10A6 / LMG 26770 / FZB42) (Bacillus amyloliquefaciens subsp. plantarum), this protein is Large ribosomal subunit protein bL35.